The chain runs to 91 residues: Protein sigN139 (91 aa).

N-linked (GlcNAc...) asparagine glycans are attached at residues N23 and N34. Residues 46–68 (LLPVVAFISGTVTSITGLVAGAL) traverse the membrane as a helical segment.

It is found in the membrane. The protein is Protein sigN139 of Dictyostelium discoideum (Social amoeba).